The primary structure comprises 226 residues: dTTP/UTP pyrophosphatase (226 aa).

The Proton acceptor role is filled by Asp85.

It belongs to the Maf family. YhdE subfamily. Requires a divalent metal cation as cofactor.

It is found in the cytoplasm. It catalyses the reaction dTTP + H2O = dTMP + diphosphate + H(+). It carries out the reaction UTP + H2O = UMP + diphosphate + H(+). In terms of biological role, nucleoside triphosphate pyrophosphatase that hydrolyzes dTTP and UTP. May have a dual role in cell division arrest and in preventing the incorporation of modified nucleotides into cellular nucleic acids. This is dTTP/UTP pyrophosphatase from Psychrobacter cryohalolentis (strain ATCC BAA-1226 / DSM 17306 / VKM B-2378 / K5).